The following is a 142-amino-acid chain: Gonadotropin subunit beta-2 (142 aa).

The first 23 residues, 1 to 23 (MLGLHVGTLISLFLCILLEPVEG), serve as a signal peptide directing secretion. 6 disulfide bridges follow: Cys-29–Cys-77, Cys-43–Cys-92, Cys-46–Cys-130, Cys-54–Cys-108, Cys-58–Cys-110, and Cys-113–Cys-120. N-linked (GlcNAc...) asparagine glycosylation occurs at Asn-33.

Belongs to the glycoprotein hormones subunit beta family. In terms of assembly, heterodimer of an alpha and a beta chain.

It localises to the secreted. Its function is as follows. Involved in gametogenesis and steroidogenesis. The polypeptide is Gonadotropin subunit beta-2 (cgbb) (Oncorhynchus keta (Chum salmon)).